A 71-amino-acid polypeptide reads, in one-letter code: Small integral membrane protein 31 (71 aa).

Residues 8–28 (LEMAFILLAFVIFSLFTLASI) traverse the membrane as a helical segment. The disordered stretch occupies residues 31–71 (TPDDSNEEEEHEKKGREKKRKKSEKKKNCSEEEHRIEAVEL). Over residues 46–55 (REKKRKKSEK) the composition is skewed to basic residues. Residues 56–71 (KKNCSEEEHRIEAVEL) are compositionally biased toward basic and acidic residues. A glycan (N-linked (GlcNAc...) asparagine) is linked at N58.

It is found in the membrane. The chain is Small integral membrane protein 31 from Homo sapiens (Human).